Here is a 213-residue protein sequence, read N- to C-terminus: Small ribosomal subunit protein eS1 (213 aa).

This sequence belongs to the eukaryotic ribosomal protein eS1 family.

The polypeptide is Small ribosomal subunit protein eS1 (Desulfurococcus amylolyticus (strain DSM 18924 / JCM 16383 / VKM B-2413 / 1221n) (Desulfurococcus kamchatkensis)).